The primary structure comprises 387 residues: Eukaryotic translation initiation factor 3 subunit M (387 aa).

Positions 181–340 (LSSKVMIELL…RKVHISSTMH (160 aa)) constitute a PCI domain.

Belongs to the eIF-3 subunit M family. As to quaternary structure, component of the eukaryotic translation initiation factor 3 (eIF-3) complex. The eIF-3 complex interacts with pix.

Its subcellular location is the cytoplasm. The protein resides in the golgi apparatus. Its function is as follows. Component of the eukaryotic translation initiation factor 3 (eIF-3) complex, which is involved in protein synthesis of a specialized repertoire of mRNAs and, together with other initiation factors, stimulates binding of mRNA and methionyl-tRNAi to the 40S ribosome. The eIF-3 complex specifically targets and initiates translation of a subset of mRNAs involved in cell proliferation. This is Eukaryotic translation initiation factor 3 subunit M from Drosophila pseudoobscura pseudoobscura (Fruit fly).